The chain runs to 547 residues: Solute carrier family 22 member 25 (547 aa).

Over 1–9 (MAFQDLLDQ) the chain is Cytoplasmic. The chain crosses the membrane as a helical span at residues 10 to 30 (VGGLGRFQILQMVFLIMFNVI). Residues 31–145 (VYHQTQLENF…DLVCESQPLN (115 aa)) are Extracellular-facing. Residues Asn-56 and Asn-102 are each glycosylated (N-linked (GlcNAc...) asparagine). Residues 146 to 166 (SVAKFLFMAGMMVGGNLYGHL) traverse the membrane as a helical segment. Residues 167–177 (SDRFGRKFVLR) lie on the Cytoplasmic side of the membrane. A helical transmembrane segment spans residues 178–198 (WSYLQLAIVGTCAAFAPTILV). Topologically, residues 199 to 204 (YCSLRF) are extracellular. Residues 205–225 (LAGAATFSIIVNTVLLIVEWI) traverse the membrane as a helical segment. Over 226 to 234 (THQFCAMAL) the chain is Cytoplasmic. A helical membrane pass occupies residues 235-255 (TLTLCAASIGHITLGSLAFVI). The Extracellular portion of the chain corresponds to 256-259 (RDQC). Residues 260–280 (ILQLVMSAPCFVFFLFSRWLA) traverse the membrane as a helical segment. The Cytoplasmic segment spans residues 281–349 (ESARWLIINN…LLRIPNICKR (69 aa)). Residues 350–370 (ICFLSFVRFASTIPFWGLTLH) form a helical membrane-spanning segment. The Extracellular portion of the chain corresponds to 371 to 377 (LQHLGNN). A helical transmembrane segment spans residues 378–398 (VFLLQTLFGAVTLLANCVAPW). Over 399–406 (ALNHMSRR) the chain is Cytoplasmic. A helical transmembrane segment spans residues 407–427 (LSQMLLMFLLATCLLAIIFVP). Residues 428-434 (QEMQTLR) lie on the Extracellular side of the membrane. Residues 435–455 (VVLATLGVGAASLGITCSTAQ) traverse the membrane as a helical segment. The Cytoplasmic portion of the chain corresponds to 456-470 (ENELIPSIIRGRATG). A helical membrane pass occupies residues 471-491 (ITGNFANIGGALASLMMILSI). Residues 492–494 (YSR) are Extracellular-facing. The helical transmembrane segment at 495–515 (PLPWIIYGVFAILSGLVVLLL) threads the bilayer. The Cytoplasmic segment spans residues 516–547 (PETRNQPLLDSIQDVENEGVNSLAAPQRSSVL).

This sequence belongs to the major facilitator (TC 2.A.1) superfamily. Organic cation transporter (TC 2.A.1.19) family. As to expression, expressed exclusively in liver in both embryo and adult.

It localises to the membrane. This is Solute carrier family 22 member 25 from Homo sapiens (Human).